The following is a 211-amino-acid chain: Imidazole glycerol phosphate synthase subunit HisH (211 aa).

Residues 1-211 (MIGIIDYGMG…VGIATGRGNG (211 aa)) enclose the Glutamine amidotransferase type-1 domain. The Nucleophile role is filled by Cys-79. Catalysis depends on residues His-186 and Glu-188.

As to quaternary structure, heterodimer of HisH and HisF.

The protein localises to the cytoplasm. It catalyses the reaction 5-[(5-phospho-1-deoxy-D-ribulos-1-ylimino)methylamino]-1-(5-phospho-beta-D-ribosyl)imidazole-4-carboxamide + L-glutamine = D-erythro-1-(imidazol-4-yl)glycerol 3-phosphate + 5-amino-1-(5-phospho-beta-D-ribosyl)imidazole-4-carboxamide + L-glutamate + H(+). It carries out the reaction L-glutamine + H2O = L-glutamate + NH4(+). Its pathway is amino-acid biosynthesis; L-histidine biosynthesis; L-histidine from 5-phospho-alpha-D-ribose 1-diphosphate: step 5/9. Its function is as follows. IGPS catalyzes the conversion of PRFAR and glutamine to IGP, AICAR and glutamate. The HisH subunit catalyzes the hydrolysis of glutamine to glutamate and ammonia as part of the synthesis of IGP and AICAR. The resulting ammonia molecule is channeled to the active site of HisF. The sequence is that of Imidazole glycerol phosphate synthase subunit HisH from Geobacillus kaustophilus (strain HTA426).